The primary structure comprises 202 residues: Coiled-coil domain-containing protein 85B (202 aa).

Met1 carries the post-translational modification N-acetylmethionine. Coiled coils occupy residues 43 to 90 (GRLM…ERQR) and 118 to 147 (QKLA…LGEE). The segment at 148–202 (WGPRGGPSGAGGSGAGPAPELALPPCGPRDLGDGSSSTGSVGSPDQLPLACSPDD) is disordered. Over residues 150–162 (PRGGPSGAGGSGA) the composition is skewed to gly residues. A compositionally biased stretch (low complexity) spans 180–190 (DGSSSTGSVGS).

Belongs to the CCDC85 family. In terms of assembly, interacts with CEBPB. Interacts with EURL. May interact with CEBPD. Interacts with MCRS1. Interacts with TCF7L2; competes with CTNNB1. Interacts with ANKRD26. Interacts with the beta-catenin family proteins ARVCF, CTNND1, CTNND2 and PKP4. (Microbial infection) Interacts with the viral phosphoprotein hepatitis delta antigen (HDAG); this interaction affects hepatitis delta virus (HDV) genomic replication in intact cells. Widely expressed including liver.

The protein localises to the nucleus. Its subcellular location is the cytoplasm. It is found in the cytoskeleton. It localises to the microtubule organizing center. The protein resides in the centrosome. The protein localises to the cell junction. Its subcellular location is the adherens junction. Its function is as follows. Functions as a transcriptional repressor. May inhibit the activity of CTNNB1 in a TP53-dependent manner and thus regulate cell growth. May function in adipocyte differentiation, negatively regulating mitotic clonal expansion. Plays a role in cell-cell adhesion and epithelium development through its interaction with proteins of the beta-catenin family. In terms of biological role, (Microbial infection) Plays a role in hepatitis delta virus (HDV) genomic replication. The protein is Coiled-coil domain-containing protein 85B (CCDC85B) of Homo sapiens (Human).